Consider the following 46-residue polypeptide: Defensin Tk-AMP-D6.1 (46 aa).

Disulfide bonds link C3-C46, C14-C34, C20-C40, and C24-C42.

Plant defense peptide. In Triticum kiharae (Wheat), this protein is Defensin Tk-AMP-D6.1.